Reading from the N-terminus, the 927-residue chain is Alpha-catenin-like protein hmp-1 (927 aa).

Coiled-coil stretches lie at residues 319 to 354 and 672 to 696; these read TREN…RRDD and QENQ…QIDI. The disordered stretch occupies residues 901 to 927; that stretch reads RNEIETGRDSDDEELDRRHQQRINGRL.

Belongs to the vinculin/alpha-catenin family. Component of a core catenin-cadherin complex consisting of hmr-1, hmp-1 and hmp-2; the complex localizes to adherens junctions. May interact with hmp-2. In terms of tissue distribution, epidermal cells.

Its subcellular location is the cell junction. The protein resides in the adherens junction. It localises to the cytoplasm. In terms of biological role, required for cell migration during body enclosure and cell shape changes during body elongation. Required for proper localization of other junctional components, such as pac-1. In Caenorhabditis elegans, this protein is Alpha-catenin-like protein hmp-1 (hmp-1).